Reading from the N-terminus, the 101-residue chain is Urease subunit beta (101 aa).

This sequence belongs to the urease beta subunit family. Heterotrimer of UreA (gamma), UreB (beta) and UreC (alpha) subunits. Three heterotrimers associate to form the active enzyme.

It is found in the cytoplasm. The catalysed reaction is urea + 2 H2O + H(+) = hydrogencarbonate + 2 NH4(+). It functions in the pathway nitrogen metabolism; urea degradation; CO(2) and NH(3) from urea (urease route): step 1/1. The sequence is that of Urease subunit beta from Hahella chejuensis (strain KCTC 2396).